The primary structure comprises 418 residues: Gamma-glutamyl phosphate reductase (418 aa).

Belongs to the gamma-glutamyl phosphate reductase family.

It localises to the cytoplasm. The catalysed reaction is L-glutamate 5-semialdehyde + phosphate + NADP(+) = L-glutamyl 5-phosphate + NADPH + H(+). The protein operates within amino-acid biosynthesis; L-proline biosynthesis; L-glutamate 5-semialdehyde from L-glutamate: step 2/2. Its function is as follows. Catalyzes the NADPH-dependent reduction of L-glutamate 5-phosphate into L-glutamate 5-semialdehyde and phosphate. The product spontaneously undergoes cyclization to form 1-pyrroline-5-carboxylate. The chain is Gamma-glutamyl phosphate reductase from Geobacter sulfurreducens (strain ATCC 51573 / DSM 12127 / PCA).